Consider the following 1161-residue polypeptide: DNA-directed RNA polymerase III subunit 2 (1161 aa).

Residues 1104–1125 (CRACGLLGYYNYKLKKAVCTTC) form a C4-type zinc finger.

The protein belongs to the RNA polymerase beta chain family. As to quaternary structure, component of the RNA polymerase III (Pol III) complex consisting of 17 subunits.

The protein resides in the nucleus. It catalyses the reaction RNA(n) + a ribonucleoside 5'-triphosphate = RNA(n+1) + diphosphate. In terms of biological role, DNA-dependent RNA polymerase catalyzes the transcription of DNA into RNA using the four ribonucleoside triphosphates as substrates. Second largest core component of RNA polymerase III which synthesizes small RNAs, such as 5S rRNA and tRNAs. Proposed to contribute to the polymerase catalytic activity and forms the polymerase active center together with the largest subunit. Pol III is composed of mobile elements and NRPC2 is part of the core element with the central large cleft and probably a clamp element that moves to open and close the cleft. Functionally, essential for the completion of the three rounds of mitosis in female megaspores required for the development of mature gametophytes. The chain is DNA-directed RNA polymerase III subunit 2 from Arabidopsis thaliana (Mouse-ear cress).